Reading from the N-terminus, the 250-residue chain is Methylthioribulose-1-phosphate dehydratase (250 aa).

A substrate-binding site is contributed by C103. Residues H121 and H123 each coordinate Zn(2+). E146 acts as the Proton donor/acceptor in catalysis. H211 is a Zn(2+) binding site.

It belongs to the aldolase class II family. MtnB subfamily. The cofactor is Zn(2+).

The protein resides in the cytoplasm. The catalysed reaction is 5-(methylsulfanyl)-D-ribulose 1-phosphate = 5-methylsulfanyl-2,3-dioxopentyl phosphate + H2O. It participates in amino-acid biosynthesis; L-methionine biosynthesis via salvage pathway; L-methionine from S-methyl-5-thio-alpha-D-ribose 1-phosphate: step 2/6. Its function is as follows. Catalyzes the dehydration of methylthioribulose-1-phosphate (MTRu-1-P) into 2,3-diketo-5-methylthiopentyl-1-phosphate (DK-MTP-1-P). The chain is Methylthioribulose-1-phosphate dehydratase from Clavispora lusitaniae (strain ATCC 42720) (Yeast).